The sequence spans 92 residues: Small ribosomal subunit protein uS19 (92 aa).

It belongs to the universal ribosomal protein uS19 family.

Protein S19 forms a complex with S13 that binds strongly to the 16S ribosomal RNA. This is Small ribosomal subunit protein uS19 from Paracoccus denitrificans (strain Pd 1222).